The chain runs to 109 residues: Large ribosomal subunit protein eL30A (109 aa).

It belongs to the eukaryotic ribosomal protein eL30 family. Component of the large ribosomal subunit (LSU). Mature yeast ribosomes consist of a small (40S) and a large (60S) subunit. The 40S small subunit contains 1 molecule of ribosomal RNA (18S rRNA) and at least 33 different proteins. The large 60S subunit contains 3 rRNA molecules (25S, 5.8S and 5S rRNA) and at least 46 different proteins.

Its subcellular location is the cytoplasm. Its function is as follows. Component of the ribosome, a large ribonucleoprotein complex responsible for the synthesis of proteins in the cell. The small ribosomal subunit (SSU) binds messenger RNAs (mRNAs) and translates the encoded message by selecting cognate aminoacyl-transfer RNA (tRNA) molecules. The large subunit (LSU) contains the ribosomal catalytic site termed the peptidyl transferase center (PTC), which catalyzes the formation of peptide bonds, thereby polymerizing the amino acids delivered by tRNAs into a polypeptide chain. The nascent polypeptides leave the ribosome through a tunnel in the LSU and interact with protein factors that function in enzymatic processing, targeting, and the membrane insertion of nascent chains at the exit of the ribosomal tunnel. This chain is Large ribosomal subunit protein eL30A (rpl3001), found in Schizosaccharomyces pombe (strain 972 / ATCC 24843) (Fission yeast).